We begin with the raw amino-acid sequence, 247 residues long: HTH-type transcriptional regulator SarU (247 aa).

2 consecutive DNA-binding regions (H-T-H motif) follow at residues 53–76 (LKEI…SLSK) and 178–201 (LKDL…RLNN).

It belongs to the SarA family.

It is found in the cytoplasm. Functionally, positive regulator of RNAII and RNAIII in a cell density-dependent manner. It can contribute to the expression of virulence genes controlled by agr. May also regulate target genes via an agr-independent pathway. The polypeptide is HTH-type transcriptional regulator SarU (sarU) (Staphylococcus aureus (strain NCTC 8325 / PS 47)).